Consider the following 154-residue polypeptide: Ubiquitin-conjugating enzyme E2 L3 (154 aa).

One can recognise a UBC core domain in the interval 2–149 (AASRRLMKEL…AEEFTKKYGE (148 aa)). Cys-86 (glycyl thioester intermediate) is an active-site residue. An N6-acetyllysine modification is found at Lys-131.

It belongs to the ubiquitin-conjugating enzyme family. In terms of assembly, interacts with PRKN; involved in ubiquitination and degradation of misfolded proteins. Interacts with UBE3A. Interacts with CCNB1IP1, CBL, ZAP70, RNF19A, RNF19B and RNF144B. Interacts with ARIH1. Interacts with ARIH2 (via RING-type 1). Interacts with NCOA1; they functionally interact to regulate progesterone receptor transcriptional activity. Interacts with NDFIP1 (via N-terminus); the interaction mediates recruitment of UBE2L3 to ITCH and causes MAP3K7 ubiquitination. Post-translationally, ubiquitinated. The alteration of UBE2L3 protein levels during the S-phase of the cell cycle is due to ubiquitin-dependent proteasomal degradation. Autoubiquitinated in vitro.

It is found in the nucleus. The protein resides in the cytoplasm. The catalysed reaction is S-ubiquitinyl-[E1 ubiquitin-activating enzyme]-L-cysteine + [E2 ubiquitin-conjugating enzyme]-L-cysteine = [E1 ubiquitin-activating enzyme]-L-cysteine + S-ubiquitinyl-[E2 ubiquitin-conjugating enzyme]-L-cysteine.. It participates in protein modification; protein ubiquitination. Functionally, ubiquitin-conjugating enzyme E2 that specifically acts with HECT-type and RBR family E3 ubiquitin-protein ligases. Does not function with most RING-containing E3 ubiquitin-protein ligases because it lacks intrinsic E3-independent reactivity with lysine: in contrast, it has activity with the RBR family E3 enzymes, such as PRKN, RNF31 and ARIH1, that function like RING-HECT hybrids. Accepts ubiquitin from the E1 complex and catalyzes its covalent attachment to other proteins. Mediates ubiquitination by the CUL9-RBX1 complex. In vitro catalyzes 'Lys-11'-linked polyubiquitination. Involved in the selective degradation of short-lived and abnormal proteins. Down-regulated during the S-phase it is involved in progression through the cell cycle. Regulates nuclear hormone receptors transcriptional activity. May play a role in myelopoiesis. The sequence is that of Ubiquitin-conjugating enzyme E2 L3 (UBE2L3) from Bos taurus (Bovine).